The following is a 100-amino-acid chain: Phosphoribosyl-ATP pyrophosphatase (100 aa).

Belongs to the PRA-PH family.

It is found in the cytoplasm. The catalysed reaction is 1-(5-phospho-beta-D-ribosyl)-ATP + H2O = 1-(5-phospho-beta-D-ribosyl)-5'-AMP + diphosphate + H(+). It participates in amino-acid biosynthesis; L-histidine biosynthesis; L-histidine from 5-phospho-alpha-D-ribose 1-diphosphate: step 2/9. The polypeptide is Phosphoribosyl-ATP pyrophosphatase (hisE) (Methanopyrus kandleri (strain AV19 / DSM 6324 / JCM 9639 / NBRC 100938)).